The chain runs to 409 residues: Serine/threonine transporter SstT (409 aa).

The next 9 helical transmembrane spans lie at 17 to 37 (LVGQ…FFPA), 49 to 69 (FVSA…MASI), 83 to 103 (ILLL…IASF), 142 to 162 (ALIS…GIAF), 180 to 200 (VSLI…GLVA), 218 to 238 (LVVL…LIVF), 301 to 321 (GAAI…GIAV), 331 to 351 (VVAS…LLLI), and 357 to 377 (LFGI…IIAI).

It belongs to the dicarboxylate/amino acid:cation symporter (DAACS) (TC 2.A.23) family.

The protein localises to the cell inner membrane. It carries out the reaction L-serine(in) + Na(+)(in) = L-serine(out) + Na(+)(out). It catalyses the reaction L-threonine(in) + Na(+)(in) = L-threonine(out) + Na(+)(out). Involved in the import of serine and threonine into the cell, with the concomitant import of sodium (symport system). The chain is Serine/threonine transporter SstT from Pseudomonas aeruginosa (strain UCBPP-PA14).